The chain runs to 541 residues: 2-succinyl-5-enolpyruvyl-6-hydroxy-3-cyclohexene-1-carboxylate synthase (541 aa).

It belongs to the TPP enzyme family. MenD subfamily. As to quaternary structure, homodimer. It depends on Mg(2+) as a cofactor. The cofactor is Mn(2+). Requires thiamine diphosphate as cofactor.

It carries out the reaction isochorismate + 2-oxoglutarate + H(+) = 5-enolpyruvoyl-6-hydroxy-2-succinyl-cyclohex-3-ene-1-carboxylate + CO2. Its pathway is quinol/quinone metabolism; 1,4-dihydroxy-2-naphthoate biosynthesis; 1,4-dihydroxy-2-naphthoate from chorismate: step 2/7. It functions in the pathway quinol/quinone metabolism; menaquinone biosynthesis. Its function is as follows. Catalyzes the thiamine diphosphate-dependent decarboxylation of 2-oxoglutarate and the subsequent addition of the resulting succinic semialdehyde-thiamine pyrophosphate anion to isochorismate to yield 2-succinyl-5-enolpyruvyl-6-hydroxy-3-cyclohexene-1-carboxylate (SEPHCHC). This Rhodococcus opacus (strain B4) protein is 2-succinyl-5-enolpyruvyl-6-hydroxy-3-cyclohexene-1-carboxylate synthase.